The chain runs to 282 residues: Pantothenate synthetase (282 aa).

30–37 (MGYFHEGH) serves as a coordination point for ATP. Residue His-37 is the Proton donor of the active site. Residue Gln-61 participates in (R)-pantoate binding. Gln-61 is a beta-alanine binding site. ATP is bound at residue 147-150 (GQKD). A (R)-pantoate-binding site is contributed by Gln-153. Residues Val-176 and 184 to 187 (LSSR) contribute to the ATP site.

The protein belongs to the pantothenate synthetase family. In terms of assembly, homodimer.

The protein resides in the cytoplasm. The enzyme catalyses (R)-pantoate + beta-alanine + ATP = (R)-pantothenate + AMP + diphosphate + H(+). The protein operates within cofactor biosynthesis; (R)-pantothenate biosynthesis; (R)-pantothenate from (R)-pantoate and beta-alanine: step 1/1. Functionally, catalyzes the condensation of pantoate with beta-alanine in an ATP-dependent reaction via a pantoyl-adenylate intermediate. The sequence is that of Pantothenate synthetase from Maridesulfovibrio salexigens (strain ATCC 14822 / DSM 2638 / NCIMB 8403 / VKM B-1763) (Desulfovibrio salexigens).